Consider the following 500-residue polypeptide: MSSPLSQAFAQNFLGHSPRWYKLTVLAFLLLNPLLLWLAGPVTSAWVLVGEFIFTLAMALKCYPLQPGGLLVLEALLLGLATPEALYAELQHNFPVLLLLMFMVAGIYFMKDLLLLLFSRLLLGVRSKALLSLLFCLLAALLSAFLDALTVTAVVISVAVAFFAVYHRVASGQRASEDYDPATDRQVPELHRAHLEEFRAFLRSLLMHAAVGTALGGVCTLVGEPQNLLIGHEAGWHFVEFFRQVAPVSMPVLAAGLLTCVLLEKSRRFGYGAQLPAAVRQVLAEYAASESRKRGAQQKAALLVQALAALVLIVGLALHVAEVGLIGLLVIVLITAFTGVTDEHQIGRAFQEALPFTALLVVFFAVVAVIHQQHLFTPIIQAVLALPAERQPGMLFIANGLLSAISDNVFVATIYITEVKQALDAGHMSREHFDTLAVAINTGTNLPSVATPNGQAAFLFLLTSSIAPLVRLSYGRMVWMALPYTLVMGGLGWWAVSHWL.

Helical transmembrane passes span 28 to 50, 68 to 88, 98 to 118, 121 to 141, 145 to 165, 205 to 225, 244 to 264, 311 to 331, 350 to 370, 394 to 414, 449 to 469, and 477 to 497; these read FLLL…VLVG, GGLL…ALYA, LLLM…LLLF, LLLG…LAAL, FLDA…FFAV, LLMH…VGEP, QVAP…VLLE, VLIV…LLVI, FQEA…VAVI, MLFI…VATI, VATP…IAPL, and MVWM…WAVS.

This sequence belongs to the NhaB Na(+)/H(+) (TC 2.A.34) antiporter family.

It is found in the cell inner membrane. The enzyme catalyses 2 Na(+)(in) + 3 H(+)(out) = 2 Na(+)(out) + 3 H(+)(in). Na(+)/H(+) antiporter that extrudes sodium in exchange for external protons. This is Na(+)/H(+) antiporter NhaB from Pseudomonas aeruginosa (strain UCBPP-PA14).